Here is a 412-residue protein sequence, read N- to C-terminus: Polyferredoxin protein MvhB (412 aa).

4Fe-4S ferredoxin-type domains lie at 1 to 29, 30 to 57, 67 to 96, 97 to 127, 138 to 166, 168 to 197, 207 to 236, 238 to 266, 276 to 305, 314 to 345, 357 to 386, and 385 to 412; these read MIVVNKEDCIRCGACQGTCPTAAIEVTPE, DVIYCDICGGEPKCVDACPTGALKIEDL, GRIVFNPDKCNECGDCVEVCPPQILKLDEG, KVKKIPLQGFCVMCQKCVDICPVGVIGVEGI, EGPIFIADCVGCGMCVPECPVDAITLEKV, GVIEIDEDTCIKCGVCAQTCPWNAVYISGK, RKFELDEEACIGCNTCVEACPGDFIVPKSS, LTVELPAICTACGLCEQLCPVDAIDLDVE, EGLVWDEGKCDFIGACANICPNDAIRVVTR, EKVDEEPSFAMCTRCGACTMACPKGALSLVDM, KRVQYNPALCDQCGDCIEACPYDMLKLTDE, and DEKVPLKGFCILCDQCIPACPKGALSLK. 4 residues coordinate [4Fe-4S] cluster: Cys-9, Cys-12, Cys-15, and Cys-19. Residues Cys-76, Cys-79, Cys-82, Cys-86, Cys-107, Cys-110, Cys-113, Cys-117, Cys-146, Cys-149, Cys-152, Cys-156, Cys-177, Cys-180, Cys-183, Cys-187, Cys-216, Cys-219, Cys-222, Cys-226, Cys-246, Cys-249, Cys-252, and Cys-256 each coordinate [4Fe-4S] cluster. [4Fe-4S] cluster contacts are provided by Cys-325, Cys-328, Cys-331, Cys-335, Cys-366, Cys-369, Cys-372, Cys-376, Cys-394, Cys-397, Cys-400, and Cys-404.

Requires [4Fe-4S] cluster as cofactor.

The protein is Polyferredoxin protein MvhB (mvhB) of Methanothermobacter marburgensis (strain ATCC BAA-927 / DSM 2133 / JCM 14651 / NBRC 100331 / OCM 82 / Marburg) (Methanobacterium thermoautotrophicum).